The chain runs to 373 residues: Erythronate-4-phosphate dehydrogenase (373 aa).

2 residues coordinate substrate: serine 45 and threonine 67. Residues aspartate 147, 207 to 209 (ASR), and aspartate 233 contribute to the NAD(+) site. Arginine 209 is a catalytic residue. Glutamate 238 is a catalytic residue. Histidine 255 (proton donor) is an active-site residue. Glycine 258 contributes to the NAD(+) binding site.

It belongs to the D-isomer specific 2-hydroxyacid dehydrogenase family. PdxB subfamily. In terms of assembly, homodimer.

The protein resides in the cytoplasm. It catalyses the reaction 4-phospho-D-erythronate + NAD(+) = (R)-3-hydroxy-2-oxo-4-phosphooxybutanoate + NADH + H(+). It participates in cofactor biosynthesis; pyridoxine 5'-phosphate biosynthesis; pyridoxine 5'-phosphate from D-erythrose 4-phosphate: step 2/5. Catalyzes the oxidation of erythronate-4-phosphate to 3-hydroxy-2-oxo-4-phosphonooxybutanoate. The polypeptide is Erythronate-4-phosphate dehydrogenase (Pseudoalteromonas translucida (strain TAC 125)).